Consider the following 139-residue polypeptide: uncharacterized protein (139 aa).

It localises to the mitochondrion. This is an uncharacterized protein from Marchantia polymorpha (Common liverwort).